Reading from the N-terminus, the 243-residue chain is Orotidine 5'-phosphate decarboxylase (243 aa).

Residues aspartate 12, lysine 34, 61-70 (DLKFHDIPNT), threonine 125, arginine 187, glutamine 196, glycine 216, and arginine 217 each bind substrate. The Proton donor role is filled by lysine 63.

It belongs to the OMP decarboxylase family. Type 1 subfamily. As to quaternary structure, homodimer.

It catalyses the reaction orotidine 5'-phosphate + H(+) = UMP + CO2. The protein operates within pyrimidine metabolism; UMP biosynthesis via de novo pathway; UMP from orotate: step 2/2. In terms of biological role, catalyzes the decarboxylation of orotidine 5'-monophosphate (OMP) to uridine 5'-monophosphate (UMP). This Heliobacterium modesticaldum (strain ATCC 51547 / Ice1) protein is Orotidine 5'-phosphate decarboxylase.